Reading from the N-terminus, the 328-residue chain is Malate dehydrogenase (328 aa).

11–17 (GAAGQIG) serves as a coordination point for NAD(+). Residues Arg94 and Arg100 each coordinate substrate. Residues Asn107, Gln114, and 131–133 (VGN) contribute to the NAD(+) site. 2 residues coordinate substrate: Asn133 and Arg164. Residue His189 is the Proton acceptor of the active site.

It belongs to the LDH/MDH superfamily. MDH type 2 family.

The enzyme catalyses (S)-malate + NAD(+) = oxaloacetate + NADH + H(+). In terms of biological role, catalyzes the reversible oxidation of malate to oxaloacetate. The protein is Malate dehydrogenase of Xylella fastidiosa (strain Temecula1 / ATCC 700964).